Consider the following 466-residue polypeptide: 20-hydroxyecdysone protein (466 aa).

Residues 1–16 (MKPVALILVFLAISQA) form the signal peptide. One copy of the 1; approximate repeat lies at 48–50 (EVK). A 16 X repeats region spans residues 48–157 (EVKAEEVKPE…EIKKEATEIK (110 aa)). The 2; approximate repeat unit spans residues 53 to 55 (EVK). The segment at 55-94 (KPEEVKPIAQEEKAKDLKEEVKPEIKPEIKEQPKPDIKDE) is disordered. One copy of the 3; approximate repeat lies at 58-60 (EVK). A 4; approximate repeat occupies 70–72 (DLK). The 5; approximate repeat unit spans residues 74–76 (EVK). The 6; approximate repeat unit spans residues 78–80 (EIK). A 7; approximate repeat occupies 82 to 84 (EIK). One copy of the 8; approximate repeat lies at 90 to 92 (DIK). The stretch at 94 to 96 (EIK) is one 9; approximate repeat. Residues 98–100 (DLK) form a 10; approximate repeat. One copy of the 11; approximate repeat lies at 102–104 (DIK). Residues 106 to 108 (ELK) form a 12; approximate repeat. The disordered stretch occupies residues 119-220 (PNAKPLELKE…QQSTTQGNFV (102 aa)). Positions 124-160 (LELKEKSLEAEEKPQEIKEEVQQPEIKKEATEIKEEP) are enriched in basic and acidic residues. One copy of the 13; approximate repeat lies at 125–127 (ELK). One copy of the 14; approximate repeat lies at 139–141 (EIK). The stretch at 148–150 (EIK) is one 15; approximate repeat. One copy of the 16; approximate repeat lies at 155-157 (EIK). A compositionally biased stretch (low complexity) spans 170 to 180 (AEETVVVPAEE). The span at 185-194 (PVEQEQSENQ) shows a compositional bias: polar residues. A compositionally biased stretch (low complexity) spans 203-216 (QATQATPTQQSTTQ). N-linked (GlcNAc...) asparagine glycosylation is found at Asn-294 and Asn-352. A disordered region spans residues 378 to 435 (RPQNAPAAAPATQATEKPAVDDKIDPANDEVGEFVPESDNELRASGENIDDSFEDAGV). The span at 379-394 (PQNAPAAAPATQATEK) shows a compositional bias: low complexity. Acidic residues predominate over residues 404–416 (ANDEVGEFVPESD).

The protein resides in the secreted. Probably has an essential role in embryogenesis, induces morphogenesis of imaginal disks, and may participate in multimolecular aggregates. This Drosophila melanogaster (Fruit fly) protein is 20-hydroxyecdysone protein (ImpE2).